A 764-amino-acid polypeptide reads, in one-letter code: MGSNLSPQLCLMPFILGLLSGGVTTTPWSLARPQGSCSLEGVEIKGGSFRLLQEGQALEYVCPSGFYPYPVQTRTCRSTGSWSTLKTQDQKTVRKAECRAIHCPRPHDFENGEYWPRSPYYNVSDEISFHCYDGYTLRGSANRTCQVNGRWSGQTAICDNGAGYCSNPGIPIGTRKVGSQYRLEDSVTYHCSRGLTLRGSQRRTCQEGGSWSGTEPSCQDSFMYDTPQEVAEAFLSSLTETIEGVDAEDGHGPGEQQKRKIVLDPSGSMNIYLVLDGSDSIGASNFTGAKKCLVNLIEKVASYGVKPRYGLVTYATYPKIWVKVSDPDSSNADWVTKQLNEINYEDHKLKSGTNTKKALQAVYSMMSWPDDVPPEGWNRTRHVIILMTDGLHNMGGDPITVIDEIRDLLYIGKDHKNPREDYLDVYVFGVGPLVNQVNINALASKKDNEQHVFKVKDMENLEDVFYQMIDESQSLSLCGMVWEHRKGTDYHKQPWQAKISVIRPSKGHESCMGAVVSEYFVLTAAHCFTVDDKEHSIKVSVGGEKRDLEIEVVLFHPNYNINGKKEAGIPEFYDYDVALIKLKNKLKYGQTIRPICLPCTEGTTRALRLPPTTTCQQQKEELLPAQDIKALFVSEEEKKLTRKEVYIKNGDKKGSCERDAQYAPGYDKVKDISEVVTPRFLCTGGVSPYADPNTCRGDSGGPLIVHKRSRFIQVGVISWGVVDVCKNQKRQKQVPAHARDFHINLFQVLPWLKEKLQDEDLGFL.

The N-terminal stretch at 1-25 is a signal peptide; the sequence is MGSNLSPQLCLMPFILGLLSGGVTT. Sushi domains are found at residues 35-100, 101-160, and 163-220; these read GSCS…ECRA, IHCP…ICDN, and GYCS…SCQD. 6 cysteine pairs are disulfide-bonded: Cys-37–Cys-76, Cys-62–Cys-98, Cys-103–Cys-145, Cys-131–Cys-158, Cys-165–Cys-205, and Cys-191–Cys-218. N-linked (GlcNAc...) asparagine glycans are attached at residues Asn-122 and Asn-142. The VWFA domain occupies 270–469; the sequence is NIYLVLDGSD…NLEDVFYQMI (200 aa). Residues Ser-278 and Ser-280 each contribute to the Mg(2+) site. An N-linked (GlcNAc...) asparagine glycan is attached at Asn-285. Thr-353 is a Mg(2+) binding site. Residue Asn-378 is glycosylated (N-linked (GlcNAc...) asparagine). A Peptidase S1 domain is found at 477–757; the sequence is LCGMVWEHRK…VLPWLKEKLQ (281 aa). Intrachain disulfides connect Cys-478-Cys-596, Cys-511-Cys-527, Cys-599-Cys-615, Cys-656-Cys-682, and Cys-695-Cys-725. Residues His-526 and Asp-576 each act as charge relay system in the active site. The active-site Charge relay system is Ser-699.

Belongs to the peptidase S1 family. As to quaternary structure, monomer. Interacts with complement C3b; this interaction is dependent on the presence of Mg(2+). Catalytic component of the C3 convertase of the alternative complement pathway, also named C3bBb, composed of complement factor B Bb and complement C3b. Catalytic component of the C5 convertase of the alternative complement pathway, also named C3bBb3b, composed of complement factor B Bb and additional molecules of complement C3b. Interacts to CFP; this interaction contributes to the stabilization of the active C3-convertase enzyme complex. Requires Mg(2+) as cofactor. Mn(2+) serves as cofactor. In terms of processing, cleaved by CFD following activation of the alternative complement system, generating Ba and Bb chains. Cleavage and activation takes place when CFB is already associated with complement C3b.

It is found in the secreted. The protein localises to the cell surface. The enzyme catalyses Cleavage of Arg-|-Ser bond in complement component C3 alpha-chain to yield C3a and C3b, and Arg-|-Xaa bond in complement component C5 alpha-chain to yield C5a and C5b.. Its function is as follows. Precursor of the catalytic component of the C3 and C5 convertase complexes of the alternative pathway of the complement system, a cascade of proteins that leads to phagocytosis and breakdown of pathogens and signaling that strengthens the adaptive immune system. The alternative complement pathway acts as an amplification loop that enhances other complement pathways (classical, lectin and GZMK) by promoting formation of additional C3 and C5 convertases. CFB is cleaved and activated by CFD to generate Ba and Bb chains; Bb chain constituting the catalytic component of the C3 and C5 convertases. Functionally, serine protease component of the complement C3 and C5 convertase complexes of the alternative complement pathway. Following cleavage and activation by factor D (CFD), forms the C3 convertase together with complement C3b. As part of the C3 convertase, cleaves and activates C3 into C3a anaphylatoxin and C3b opsonin, the next components of the complement pathways. When an additional complement C3b molecule binds to the C3 convertase, forms the C5 convertase, which cleaves and activates C5 into C5a anaphylatoxin and C5b component of the membrane attack complex. Involved in proliferation and differentiation of preactivated B-lymphocytes, rapid spreading of peripheral blood monocytes, stimulation of lymphocyte blastogenesis and lysis of erythrocytes. The sequence is that of Complement factor B (CFB) from Gorilla gorilla gorilla (Western lowland gorilla).